The sequence spans 307 residues: Glutaminase (307 aa).

Serine 66, asparagine 116, glutamate 160, asparagine 167, tyrosine 191, tyrosine 243, and valine 261 together coordinate substrate.

The protein belongs to the glutaminase family. Homotetramer.

It catalyses the reaction L-glutamine + H2O = L-glutamate + NH4(+). The sequence is that of Glutaminase from Saccharophagus degradans (strain 2-40 / ATCC 43961 / DSM 17024).